The sequence spans 477 residues: Sulfate adenylyltransferase subunit 1 (477 aa).

The tr-type G domain occupies 22–239 (KDMLRFITCG…TVQISHDAPL (218 aa)). Residues 31–38 (GSVDDGKS) form a G1 region. 31-38 (GSVDDGKS) provides a ligand contact to GTP. The tract at residues 89–93 (GITID) is G2. Residues 110 to 113 (DCPG) form a G3 region. GTP contacts are provided by residues 110-114 (DCPGH) and 165-168 (NKMD). Residues 165 to 168 (NKMD) are G4. Residues 202–204 (SAL) are G5.

This sequence belongs to the TRAFAC class translation factor GTPase superfamily. Classic translation factor GTPase family. CysN/NodQ subfamily. As to quaternary structure, heterodimer composed of CysD, the smaller subunit, and CysN.

It catalyses the reaction sulfate + ATP + H(+) = adenosine 5'-phosphosulfate + diphosphate. It participates in sulfur metabolism; hydrogen sulfide biosynthesis; sulfite from sulfate: step 1/3. In terms of biological role, with CysD forms the ATP sulfurylase (ATPS) that catalyzes the adenylation of sulfate producing adenosine 5'-phosphosulfate (APS) and diphosphate, the first enzymatic step in sulfur assimilation pathway. APS synthesis involves the formation of a high-energy phosphoric-sulfuric acid anhydride bond driven by GTP hydrolysis by CysN coupled to ATP hydrolysis by CysD. This Chromobacterium violaceum (strain ATCC 12472 / DSM 30191 / JCM 1249 / CCUG 213 / NBRC 12614 / NCIMB 9131 / NCTC 9757 / MK) protein is Sulfate adenylyltransferase subunit 1.